The following is a 554-amino-acid chain: Phospholipase B-like protein E (554 aa).

An N-terminal signal peptide occupies residues 1–19; sequence MKLFILLIVIVFLISNSYS. Residues N113, N140, N231, N302, N340, and N546 are each glycosylated (N-linked (GlcNAc...) asparagine).

The protein belongs to the phospholipase B-like family.

The protein localises to the secreted. Its function is as follows. Probable phospholipase. The polypeptide is Phospholipase B-like protein E (plbE) (Dictyostelium discoideum (Social amoeba)).